Here is a 119-residue protein sequence, read N- to C-terminus: Large ribosomal subunit protein bL20 (119 aa).

This sequence belongs to the bacterial ribosomal protein bL20 family.

In terms of biological role, binds directly to 23S ribosomal RNA and is necessary for the in vitro assembly process of the 50S ribosomal subunit. It is not involved in the protein synthesizing functions of that subunit. This chain is Large ribosomal subunit protein bL20, found in Mycoplasma capricolum subsp. capricolum (strain California kid / ATCC 27343 / NCTC 10154).